A 277-amino-acid chain; its full sequence is Shikimate dehydrogenase (NADP(+)) (277 aa).

Shikimate is bound by residues 15 to 17 (SLS) and Thr62. The active-site Proton acceptor is Lys66. Residues Asn87 and Asp102 each contribute to the shikimate site. Residues 127–131 (GAGGA), 151–156 (NRTVDK), and Ile219 each bind NADP(+). Residue Tyr221 participates in shikimate binding. Gly242 contacts NADP(+).

The protein belongs to the shikimate dehydrogenase family. As to quaternary structure, homodimer.

The enzyme catalyses shikimate + NADP(+) = 3-dehydroshikimate + NADPH + H(+). The protein operates within metabolic intermediate biosynthesis; chorismate biosynthesis; chorismate from D-erythrose 4-phosphate and phosphoenolpyruvate: step 4/7. In terms of biological role, involved in the biosynthesis of the chorismate, which leads to the biosynthesis of aromatic amino acids. Catalyzes the reversible NADPH linked reduction of 3-dehydroshikimate (DHSA) to yield shikimate (SA). This is Shikimate dehydrogenase (NADP(+)) from Bacillus cereus (strain ATCC 10987 / NRS 248).